The chain runs to 61 residues: uncharacterized protein (61 aa).

An N-terminal signal peptide occupies residues 1-28; it reads MHRRARRMPMRPRRSKRVRNRYTMGTFA.

This is an uncharacterized protein from Mycobacterium tuberculosis (strain ATCC 25618 / H37Rv).